The sequence spans 246 residues: tRNA (guanine-N(1)-)-methyltransferase (246 aa).

Gly-114 contacts S-adenosyl-L-methionine.

It belongs to the RNA methyltransferase TrmD family. In terms of assembly, homodimer.

It is found in the cytoplasm. The catalysed reaction is guanosine(37) in tRNA + S-adenosyl-L-methionine = N(1)-methylguanosine(37) in tRNA + S-adenosyl-L-homocysteine + H(+). In terms of biological role, specifically methylates guanosine-37 in various tRNAs. This chain is tRNA (guanine-N(1)-)-methyltransferase, found in Novosphingobium aromaticivorans (strain ATCC 700278 / DSM 12444 / CCUG 56034 / CIP 105152 / NBRC 16084 / F199).